A 479-amino-acid polypeptide reads, in one-letter code: Cardiolipin synthase A (479 aa).

2 helical membrane-spanning segments follow: residues 8–28 (FFGY…LHAL) and 38–58 (IAWA…YLIF). PLD phosphodiesterase domains follow at residues 218-245 (VNFR…GDEY) and 392-419 (QPGF…DNRS). Residues His-223, Lys-225, Asp-230, His-397, Lys-399, and Asp-404 contribute to the active site.

The protein belongs to the phospholipase D family. Cardiolipin synthase subfamily. ClsA sub-subfamily.

The protein localises to the cell inner membrane. It carries out the reaction 2 a 1,2-diacyl-sn-glycero-3-phospho-(1'-sn-glycerol) = a cardiolipin + glycerol. In terms of biological role, catalyzes the reversible phosphatidyl group transfer from one phosphatidylglycerol molecule to another to form cardiolipin (CL) (diphosphatidylglycerol) and glycerol. The sequence is that of Cardiolipin synthase A from Pseudomonas putida (strain ATCC 700007 / DSM 6899 / JCM 31910 / BCRC 17059 / LMG 24140 / F1).